Consider the following 534-residue polypeptide: Pentatricopeptide repeat-containing protein At5g08305 (534 aa).

PPR repeat units lie at residues 41–71 (PFVSQTLSFSALSSSGDVDYAYKFLSKLSDP), 72–106 (PNYGWNFVIRGFSNSRNPEKSISVYIQMLRFGLLP), 107–141 (DHMTYPFLMKSSSRLSNRKLGGSLHCSVVKSGLEW), 142–172 (DLFICNTLIHMYGSFRDQASARKLFDEMPHK), 173–203 (NLVTWNSILDAYAKSGDVVSARLVFDEMSER), 204–238 (DVVTWSSMIDGYVKRGEYNKALEIFDQMMRMGSSK), 240–274 (NEVTMVSVICACAHLGALNRGKTVHRYILDVHLPL), 275–305 (TVILQTSLIDMYAKCGSIGDAWSVFYRASVK), 308–342 (DALMWNAIIGGLASHGFIRESLQLFHKMRESKIDP), 343–377 (DEITFLCLLAACSHGGLVKEAWHFFKSLKESGAEP), and 378–408 (KSEHYACMVDVLSRAGLVKDAHDFISEMPIK). Residues 413–488 (MLGALLNGCI…IAGHSILDLD (76 aa)) form a type E motif region. The segment at 489–519 (GTRHRFIAHDKTHFHSDKIYAVLQLTGAWMN) is type E(+) motif.

The protein belongs to the PPR family. PCMP-E subfamily.

This is Pentatricopeptide repeat-containing protein At5g08305 (PCMP-E105) from Arabidopsis thaliana (Mouse-ear cress).